Here is a 160-residue protein sequence, read N- to C-terminus: SsrA-binding protein (160 aa).

Residues 132–160 are disordered; sequence KEFDKRDTMRERDSNRELQRAVRNKGKEE.

Belongs to the SmpB family.

It localises to the cytoplasm. Its function is as follows. Required for rescue of stalled ribosomes mediated by trans-translation. Binds to transfer-messenger RNA (tmRNA), required for stable association of tmRNA with ribosomes. tmRNA and SmpB together mimic tRNA shape, replacing the anticodon stem-loop with SmpB. tmRNA is encoded by the ssrA gene; the 2 termini fold to resemble tRNA(Ala) and it encodes a 'tag peptide', a short internal open reading frame. During trans-translation Ala-aminoacylated tmRNA acts like a tRNA, entering the A-site of stalled ribosomes, displacing the stalled mRNA. The ribosome then switches to translate the ORF on the tmRNA; the nascent peptide is terminated with the 'tag peptide' encoded by the tmRNA and targeted for degradation. The ribosome is freed to recommence translation, which seems to be the essential function of trans-translation. The protein is SsrA-binding protein of Pseudomonas putida (strain ATCC 47054 / DSM 6125 / CFBP 8728 / NCIMB 11950 / KT2440).